Consider the following 120-residue polypeptide: Large ribosomal subunit protein eL18 (120 aa).

Belongs to the eukaryotic ribosomal protein eL18 family.

In Methanococcus maripaludis (strain DSM 14266 / JCM 13030 / NBRC 101832 / S2 / LL), this protein is Large ribosomal subunit protein eL18.